The primary structure comprises 651 residues: E3 SUMO-protein ligase PIAS1 (651 aa).

Alanine 2 is modified (N-acetylalanine). Residues 2-200 (ADSAELKQMV…KCDFTVQVQL (199 aa)) form a required for interaction with MSX1 region. The SAP domain occupies 11 to 45 (VMSLRVSELQVLLGYAGRNKHGRKHELLTKALHLL). Positions 19–23 (LQVLL) match the LXXLL motif motif. Residues lysine 40 and lysine 46 each participate in a glycyl lysine isopeptide (Lys-Gly) (interchain with G-Cter in SUMO2) cross-link. Positions 56–64 (KIKELYRRR) match the Nuclear localization signal motif. One can recognise a PINIT domain in the interval 124-288 (HLTSALHPVH…SMAVYLVKQL (165 aa)). Glycyl lysine isopeptide (Lys-Gly) (interchain with G-Cter in SUMO2) cross-links involve residues lysine 137 and lysine 238. The SP-RING-type zinc-finger motif lies at 320 to 405 (PDSEIATTSL…LKYCTDCDEI (86 aa)). Zn(2+) is bound by residues cysteine 351, histidine 353, cysteine 374, and cysteine 377. The Nuclear localization signal signature appears at 368–380 (KKPTWVCPVCDKK). Lysine 453 participates in a covalent cross-link: Glycyl lysine isopeptide (Lys-Gly) (interchain with G-Cter in SUMO2). The interval 462–473 (LTIDSSSDEEEE) is SUMO1-binding. The tract at residues 465-511 (DSSSDEEEEEPPAKRTCPSLSPTSPLSNKGILSLPHQASPVSRTPSL) is disordered. Serine 467, serine 468, serine 483, and serine 485 each carry phosphoserine. The segment covering 482–491 (PSLSPTSPLS) has biased composition (low complexity). At threonine 487 the chain carries Phosphothreonine. A phosphoserine mark is found at serine 488 and serine 491. Lysine 493 is covalently cross-linked (Glycyl lysine isopeptide (Lys-Gly) (interchain with G-Cter in SUMO2)). A phosphoserine mark is found at serine 503, serine 510, and serine 522. Tandem repeats lie at residues 520–523 (NTSL) and 557–560 (NTSL). The 4 X 4 AA repeats of N-T-S-L stretch occupies residues 520-615 (NTSLIQDYRH…GSSSGSNSSL (96 aa)). The 3; approximate repeat unit spans residues 598–601 (STSL). The segment at 600 to 630 (SLPATNGSSSGSNSSLVSSNSLRESHGHGVA) is disordered. Residues 605–621 (NGSSSGSNSSLVSSNSL) are compositionally biased toward low complexity. One copy of the 4; approximate repeat lies at 612 to 615 (NSSL).

The protein belongs to the PIAS family. In terms of assembly, interacts with NR2C1; the interaction promotes its sumoylation. Interacts with DDX21, CSRP2, AXIN1, JUN, SATB2, PLAG1, TP53 and STAT1 (dimer), following IFNA1-stimulation. Interacts with SP3 (preferentially when SUMO-modified). Interacts with KLF8; the interaction results in SUMO ligation and repression of KLF8 transcriptional activity and of its cell cycle progression into G(1) phase. Interacts with CHUK/IKKA; this interaction induces PIAS1 phosphorylation. Interacts with PTK2/FAK1; the interaction promotes its sumoylation. Interacts with SUMO1, UBE2I, NCOA2 and AR. Interacts with NR2C1; the interaction promotes its sumoylation. Interacts with DDX5. Interacts with MTA1. Interacts with PML (isoform PML-12). Interacts with PRDM1. Interacts (via N-terminus) with MSX1 (via C-terminus); the interaction is required for the localization of both proteins to the nuclear periphery and specific binding of MSX1 to the core enhancer region in target gene promoters. Sumoylated. As to expression, expressed in kidney, heart, spleen, brain and cerebellum; weak expression, if any, in liver and lung.

It localises to the nucleus. Its subcellular location is the nucleus speckle. The protein localises to the PML body. It is found in the cytoplasm. The protein resides in the cytoskeleton. The enzyme catalyses S-ubiquitinyl-[E2 ubiquitin-conjugating enzyme]-L-cysteine + [acceptor protein]-L-lysine = [E2 ubiquitin-conjugating enzyme]-L-cysteine + N(6)-ubiquitinyl-[acceptor protein]-L-lysine.. Its pathway is protein modification; protein sumoylation. Its function is as follows. Functions as an E3-type small ubiquitin-like modifier (SUMO) ligase, stabilizing the interaction between UBE2I and the substrate, and as a SUMO-tethering factor. Catalyzes sumoylation of various proteins, such as CEBPB, MRE11, MTA1, PTK2 and PML. Plays a crucial role as a transcriptional coregulation in various cellular pathways, including the STAT pathway, the p53 pathway and the steroid hormone signaling pathway. In vitro, binds A/T-rich DNA. The effects of this transcriptional coregulation, transactivation or silencing, may vary depending upon the biological context. Mediates sumoylation of MRE11, stabilizing MRE11 on chromatin during end resection. Sumoylates PML (at 'Lys-65' and 'Lys-160') and PML-RAR and promotes their ubiquitin-mediated degradation. PIAS1-mediated sumoylation of PML promotes its interaction with CSNK2A1/CK2 which in turn promotes PML phosphorylation and degradation. Enhances the sumoylation of MTA1 and may participate in its paralog-selective sumoylation. Plays a dynamic role in adipogenesis by promoting the SUMOylation and degradation of CEBPB. Mediates the nuclear mobility and localization of MSX1 to the nuclear periphery, whereby MSX1 is brought into the proximity of target myoblast differentiation factor genes. Also required for the binding of MSX1 to the core enhancer region in target gene promoter regions, independent of its sumoylation activity. Capable of binding to the core enhancer region TAAT box in the MYOD1 gene promoter. The sequence is that of E3 SUMO-protein ligase PIAS1 (Pias1) from Mus musculus (Mouse).